The primary structure comprises 971 residues: Exportin-2 (971 aa).

The residue at position 1 (Met1) is an N-acetylmethionine. Residues 29–102 (AEKFLESVEG…KANIVHLMLS (74 aa)) form the Importin N-terminal domain. Ser112 is subject to Phosphoserine. Lys574 and Lys824 each carry N6-acetyllysine. Ser931 carries the post-translational modification Phosphoserine.

This sequence belongs to the XPO2/CSE1 family. In terms of assembly, found in a complex with CSE1L/XPO2, Ran and KPNA2. Binds with high affinity to importin-alpha only in the presence of RanGTP. The complex is dissociated by the combined action of RanBP1 and RanGAP1. Interacts with CFTR. In terms of tissue distribution, ubiquitous. Detected in embryos from 5 to 17 dpc. Highly expressed in adult testis, heart, brain, lung, liver, skeletal muscle, spleen and kidney.

The protein localises to the cytoplasm. The protein resides in the nucleus. In terms of biological role, export receptor for importin-alpha. Mediates importin-alpha re-export from the nucleus to the cytoplasm after import substrates (cargos) have been released into the nucleoplasm. In the nucleus binds cooperatively to importin-alpha and to the GTPase Ran in its active GTP-bound form. Docking of this trimeric complex to the nuclear pore complex (NPC) is mediated through binding to nucleoporins. Upon transit of a nuclear export complex into the cytoplasm, disassembling of the complex and hydrolysis of Ran-GTP to Ran-GDP (induced by RANBP1 and RANGAP1, respectively) cause release of the importin-alpha from the export receptor. CSE1L/XPO2 then return to the nuclear compartment and mediate another round of transport. The directionality of nuclear export is thought to be conferred by an asymmetric distribution of the GTP- and GDP-bound forms of Ran between the cytoplasm and nucleus. This Mus musculus (Mouse) protein is Exportin-2 (Cse1l).